We begin with the raw amino-acid sequence, 398 residues long: MVIKPRVRGFICVTTHPVGCEANVKQQIDYVTQQGAIDAGPKNVLVLGASTGYGLAARITAAFGCGANTLGVFFERGSVDGKLGTAGWYNTAAFHKFAEEKGLYAKSINGDAFSDAVKAETIETIKRDLGKIDLVVYSLAAPRRTHPKTGEVLSSTLKPLGKSVTLRGVDTDKEIVKETTLQPATQEEIDGTVAVMGGEDWQMWIDALHEAGVLAEGAKTTAFTYLGEKLTHDIYWNGSIGEAKKDLDQKVIGMRQQLAGLGGDARVSVLKAVVTQASSAIPIMPLYLSLLFKVMKEQGSHEGCIEQVYGLYKDSLYNSEPVIDQEGRLRADYKELQPAVQDRVKQLWDQVTSENLYEMTDFVGYKQEFLRLFGFEIEGVDYEADVDPDVKISNLIQL.

NAD(+) contacts are provided by residues 48-53 (GASTGY), 74-75 (FE), 111-112 (DA), and 139-140 (LA). Y225 contributes to the substrate binding site. The active-site Proton donor is Y235. NAD(+)-binding positions include K244 and 273 to 275 (VVT).

Belongs to the TER reductase family. Monomer.

The enzyme catalyses a 2,3-saturated acyl-[ACP] + NAD(+) = a (2E)-enoyl-[ACP] + NADH + H(+). The protein operates within lipid metabolism; fatty acid biosynthesis. Involved in the final reduction of the elongation cycle of fatty acid synthesis (FAS II). Catalyzes the reduction of a carbon-carbon double bond in an enoyl moiety that is covalently linked to an acyl carrier protein (ACP). The sequence is that of Enoyl-[acyl-carrier-protein] reductase [NADH] from Pseudomonas fluorescens (strain ATCC BAA-477 / NRRL B-23932 / Pf-5).